Consider the following 294-residue polypeptide: Cytidine deaminase (294 aa).

CMP/dCMP-type deaminase domains follow at residues 48–168 and 186–294; these read DEDA…FGPK and LTGD…VLLG. 89-91 provides a ligand contact to substrate; that stretch reads NME. H102 contacts Zn(2+). E104 functions as the Proton donor in the catalytic mechanism. Zn(2+) contacts are provided by C129 and C132.

Belongs to the cytidine and deoxycytidylate deaminase family. As to quaternary structure, homodimer. Zn(2+) serves as cofactor.

The enzyme catalyses cytidine + H2O + H(+) = uridine + NH4(+). The catalysed reaction is 2'-deoxycytidine + H2O + H(+) = 2'-deoxyuridine + NH4(+). In terms of biological role, this enzyme scavenges exogenous and endogenous cytidine and 2'-deoxycytidine for UMP synthesis. The protein is Cytidine deaminase of Salmonella arizonae (strain ATCC BAA-731 / CDC346-86 / RSK2980).